The primary structure comprises 175 residues: Phosphopantetheine adenylyltransferase (175 aa).

Residue Ser10 participates in substrate binding. Residues 10 to 11 (SF) and His18 each bind ATP. 3 residues coordinate substrate: Lys42, Leu74, and Arg88. ATP-binding positions include 89 to 91 (GMR), Glu99, and 124 to 130 (WIFTSSS).

It belongs to the bacterial CoaD family. As to quaternary structure, homohexamer. Mg(2+) is required as a cofactor.

Its subcellular location is the cytoplasm. It carries out the reaction (R)-4'-phosphopantetheine + ATP + H(+) = 3'-dephospho-CoA + diphosphate. It participates in cofactor biosynthesis; coenzyme A biosynthesis; CoA from (R)-pantothenate: step 4/5. Functionally, reversibly transfers an adenylyl group from ATP to 4'-phosphopantetheine, yielding dephospho-CoA (dPCoA) and pyrophosphate. The sequence is that of Phosphopantetheine adenylyltransferase from Desulfatibacillum aliphaticivorans.